The primary structure comprises 914 residues: Probable dipeptidyl-aminopeptidase B (914 aa).

The segment covering 1-10 (MGKSEADEDA) has biased composition (acidic residues). The segment at 1-81 (MGKSEADEDA…DQPFLPSRKG (81 aa)) is disordered. Residues 1 to 89 (MGKSEADEDA…KGSGARARRV (89 aa)) are Cytoplasmic-facing. The segment covering 20–34 (SSSAASQTSSDSGLS) has biased composition (low complexity). The helical; Signal-anchor for type II membrane protein transmembrane segment at 90-110 (FWGLLLLCLAGWVLAFVLFLI) threads the bilayer. The Vacuolar portion of the chain corresponds to 111–914 (QGRSGYSATS…FKRALPVFVH (804 aa)). Asn347 and Asn638 each carry an N-linked (GlcNAc...) asparagine glycan. Ser752 functions as the Charge relay system in the catalytic mechanism. Asn806 carries N-linked (GlcNAc...) asparagine glycosylation. Active-site charge relay system residues include Asp829 and His862.

This sequence belongs to the peptidase S9B family.

Its subcellular location is the vacuole membrane. The enzyme catalyses Release of an N-terminal dipeptide, Xaa-Yaa-|-Zaa-, from a polypeptide, preferentially when Yaa is Pro, provided Zaa is neither Pro nor hydroxyproline.. Its function is as follows. Type IV dipeptidyl-peptidase which removes N-terminal dipeptides sequentially from polypeptides having unsubstituted N-termini provided that the penultimate residue is proline. This Aspergillus terreus (strain NIH 2624 / FGSC A1156) protein is Probable dipeptidyl-aminopeptidase B (dapB).